The following is a 278-amino-acid chain: Formyltetrahydrofolate deformylase (278 aa).

The region spanning I6–I85 is the ACT domain. D223 is an active-site residue.

The protein belongs to the PurU family.

The catalysed reaction is (6R)-10-formyltetrahydrofolate + H2O = (6S)-5,6,7,8-tetrahydrofolate + formate + H(+). It functions in the pathway purine metabolism; IMP biosynthesis via de novo pathway; formate from 10-formyl-5,6,7,8-tetrahydrofolate: step 1/1. Catalyzes the hydrolysis of 10-formyltetrahydrofolate (formyl-FH4) to formate and tetrahydrofolate (FH4). This is Formyltetrahydrofolate deformylase from Haemophilus influenzae (strain ATCC 51907 / DSM 11121 / KW20 / Rd).